The chain runs to 114 residues: T cell receptor beta variable 5-4 (114 aa).

Positions 1-21 (MGPGLLCWALLCLLGAGSVET) are cleaved as a signal peptide. Residues 22–114 (GVTQSPTHLI…SALYLCASSL (93 aa)) form the Ig-like domain. An intrachain disulfide couples Cys42 to Cys110. Asn90 is a glycosylation site (N-linked (GlcNAc...) asparagine).

Alpha-beta TR is a heterodimer composed of an alpha and beta chain; disulfide-linked. The alpha-beta TR is associated with the transmembrane signaling CD3 coreceptor proteins to form the TR-CD3 (TcR or TCR). The assembly of alpha-beta TR heterodimers with CD3 occurs in the endoplasmic reticulum where a single alpha-beta TR heterodimer associates with one CD3D-CD3E heterodimer, one CD3G-CD3E heterodimer and one CD247 homodimer forming a stable octameric structure. CD3D-CD3E and CD3G-CD3E heterodimers preferentially associate with TR alpha and TR beta chains, respectively. The association of the CD247 homodimer is the last step of TcR assembly in the endoplasmic reticulum and is required for transport to the cell surface.

It localises to the cell membrane. Functionally, v region of the variable domain of T cell receptor (TR) beta chain that participates in the antigen recognition. Alpha-beta T cell receptors are antigen specific receptors which are essential to the immune response and are present on the cell surface of T lymphocytes. Recognize peptide-major histocompatibility (MH) (pMH) complexes that are displayed by antigen presenting cells (APC), a prerequisite for efficient T cell adaptive immunity against pathogens. Binding of alpha-beta TR to pMH complex initiates TR-CD3 clustering on the cell surface and intracellular activation of LCK that phosphorylates the ITAM motifs of CD3G, CD3D, CD3E and CD247 enabling the recruitment of ZAP70. In turn ZAP70 phosphorylates LAT, which recruits numerous signaling molecules to form the LAT signalosome. The LAT signalosome propagates signal branching to three major signaling pathways, the calcium, the mitogen-activated protein kinase (MAPK) kinase and the nuclear factor NF-kappa-B (NF-kB) pathways, leading to the mobilization of transcription factors that are critical for gene expression and essential for T cell growth and differentiation. The T cell repertoire is generated in the thymus, by V-(D)-J rearrangement. This repertoire is then shaped by intrathymic selection events to generate a peripheral T cell pool of self-MH restricted, non-autoaggressive T cells. Post-thymic interaction of alpha-beta TR with the pMH complexes shapes TR structural and functional avidity. This is T cell receptor beta variable 5-4 from Homo sapiens (Human).